The sequence spans 753 residues: Synaptotagmin-like protein 5 (753 aa).

In terms of domain architecture, RabBD spans 7–123; the sequence is FINLSFLLDH…IISGEWFLEE (117 aa). The segment at 64-106 adopts an FYVE-type zinc-finger fold; the sequence is CVHCQKSLGLIFDRGAPCQACSLRVCSECRVTGLDGSWKCTVC. Disordered stretches follow at residues 145 to 188, 221 to 283, and 298 to 359; these read RRSP…GFLL, SFKS…GFEN, and TKSH…LNSL. Ser-147 is modified (phosphoserine). The span at 224 to 238 shows a compositional bias: low complexity; that stretch reads SVSGSDRGSTTSSDL. Polar residues-rich tracts occupy residues 260 to 275 and 305 to 316; these read TQRSPAPSARSVTSIS and TSGTPSIAVSGT. C2 domains are found at residues 429–550 and 590–717; these read VTGE…DEWF and PQGK…VDWM.

Binds RAB27A that has been activated by GTP-binding.

The protein localises to the membrane. Its function is as follows. May act as Rab effector protein and play a role in vesicle trafficking. Binds phospholipids. This Rattus norvegicus (Rat) protein is Synaptotagmin-like protein 5 (Sytl5).